Consider the following 776-residue polypeptide: FT-interacting protein 4 (776 aa).

Positions Met-1–Pro-16 are enriched in basic and acidic residues. Positions Met-1 to Val-23 are disordered. C2 domains lie at Lys-22–Tyr-142, Val-181–Phe-305, and Tyr-346–Tyr-474. Residues Asp-55, Asp-61, Asp-108, Asp-110, and Asp-115 each contribute to the Ca(2+) site. A run of 3 helical transmembrane segments spans residues Ile-577–Trp-597, Ile-608–Leu-628, and Leu-719–Val-739.

It belongs to the MCTP family. Interacts with and regulates subcellular localization and trafficking of STM. Ca(2+) is required as a cofactor. As to expression, highly expressed in both vegetative and inflorescence shoot apical meristems (SAMs). Accumulates in root meristems. Observed in flowers.

The protein resides in the endoplasmic reticulum membrane. Its subcellular location is the cytoplasm. The protein localises to the vesicle. It localises to the cell membrane. It is found in the endosome membrane. The protein resides in the golgi apparatus membrane. In terms of biological role, required for proliferation and differentiation of shoot stem cells in the shoot apical meristem (SAM), thus determining the appropriate balance between the maintenance of shoot stem cells and their differentiation into other aboveground plant parts via the control of subcellular localization and intercellular trafficking of STM in the shoot apex. Prevents intracellular trafficking of STM to the plasma membrane in cells in the peripheral shoot meristem region thus facilitating STM recycling to the nucleus to maintain stem cells. May function as a signaling molecule by regulating the trafficking of other regulators. This chain is FT-interacting protein 4, found in Arabidopsis thaliana (Mouse-ear cress).